The primary structure comprises 179 residues: DNA utilization protein HofN (179 aa).

Residues 19–39 form a helical membrane-spanning segment; that stretch reads LRFWLLMFVAPLLLAVGITLI.

It localises to the cell inner membrane. Functionally, required for the use of extracellular DNA as a nutrient. The sequence is that of DNA utilization protein HofN (hofN) from Escherichia coli (strain K12).